A 168-amino-acid polypeptide reads, in one-letter code: Transcription antitermination protein NusB (168 aa).

The protein belongs to the NusB family.

Its function is as follows. Involved in transcription antitermination. Required for transcription of ribosomal RNA (rRNA) genes. Binds specifically to the boxA antiterminator sequence of the ribosomal RNA (rrn) operons. This is Transcription antitermination protein NusB from Chlamydia trachomatis serovar A (strain ATCC VR-571B / DSM 19440 / HAR-13).